The following is a 473-amino-acid chain: Probable aspartokinase (473 aa).

ACT domains follow at residues 323–392 and 409–473; these read IFGA…FLNN and VVGA…KTNS.

The protein belongs to the aspartokinase family.

The enzyme catalyses L-aspartate + ATP = 4-phospho-L-aspartate + ADP. The protein operates within amino-acid biosynthesis; L-lysine biosynthesis via DAP pathway; (S)-tetrahydrodipicolinate from L-aspartate: step 1/4. Its pathway is amino-acid biosynthesis; L-methionine biosynthesis via de novo pathway; L-homoserine from L-aspartate: step 1/3. It participates in amino-acid biosynthesis; L-threonine biosynthesis; L-threonine from L-aspartate: step 1/5. This Methanocaldococcus jannaschii (strain ATCC 43067 / DSM 2661 / JAL-1 / JCM 10045 / NBRC 100440) (Methanococcus jannaschii) protein is Probable aspartokinase.